Reading from the N-terminus, the 567-residue chain is Polyadenylate-binding protein-interacting protein 7 (567 aa).

The segment at 1-22 (MSLTKKASEPKLSGTSIKPTTL) is disordered. Residues 13 to 22 (SGTSIKPTTL) show a composition bias toward polar residues. The PAM2-like motif lies at 21–31 (TLNPHAAEFVP). Positions 215 to 259 (DMEVNPVDFLASQFPGFAAESLAEVYFANGCDLQLTIEMLTQLEL) constitute a CUE domain. A disordered region spans residues 355–387 (RNDSADSSIGSSRNSGAYKSGRGRSIYSDKLQS). Polar residues predominate over residues 359 to 371 (ADSSIGSSRNSGA). Residues 485–567 (IDLHGLHVSE…QAGLLRVIIY (83 aa)) form the Smr domain.

In terms of assembly, interacts with MPC and PAB2. Expressed in cauline leaves, stems, rosette leaves, immature siliques and primary inflorescences.

The chain is Polyadenylate-binding protein-interacting protein 7 (CID7) from Arabidopsis thaliana (Mouse-ear cress).